Consider the following 1771-residue polypeptide: Replicase polyprotein (1771 aa).

The stretch at 1 to 29 forms a coiled coil; the sequence is MSFQQTNNNATNNINSLEELAAQELIAAQ. A BC-box region spans residues 16-25; sequence SLEELAAQEL. The interaction with and inhibition of host AGO2 stretch occupies residues 106 to 114; the sequence is PEHRYGSTF. An SF3 helicase domain is found at 482 to 656; it reads AKSLYEQVLL…QEKSIWVRNA (175 aa). 510-517 lines the ATP pocket; it reads GESGIGKT. The tract at residues 919–942 is disordered; the sequence is VEVGSSGDSKTQKQRNTKVEVGKE. One can recognise a Peptidase C3 domain in the interval 954–1201; it reads DPAAHALVLD…YACPLTQEAI (248 aa). Active-site for picornain 3C-like protease activity residues include His-1003, Asp-1063, and Cys-1162. Residues 1385 to 1413 are a coiled coil; sequence GEQYDFTSQRAQELRRDVEELIDNCAKGI. Residues 1495-1634 enclose the RdRp catalytic domain; the sequence is NKVIAGDFGN…NISDRVVEWF (140 aa).

As to quaternary structure, interacts with host AGO2; this interaction leads to AGO2 degradation via an E3 ubiquitin ligase-dependent pathway and may block the RNA-induced silencing complexes (RISC) activity. In terms of processing, might be expressed through a ribosomal skip from one codon to the next without formation of a peptide bond.

The protein localises to the host cytoplasm. It localises to the host perinuclear region. The enzyme catalyses RNA(n) + a ribonucleoside 5'-triphosphate = RNA(n+1) + diphosphate. Functionally, suppressor of RNA-mediated gene silencing, an antiviral defense mechanism of insect cells. Inhibits siRNA function through the direct enzymatic inactivation of host AGO2, but does not interfere with miRNA pathway. Facilitates viral replication via the recruitment of a cellular ubiquitin ligase complex that promotes host AGO2 degradation. Inhibits the integrated stress response (ISR) in the infected cell possiby by degrading host Nup358. Stress granule formation is thus inhibited, which allows protein synthesis and viral replication. Does not bind to dsRNA or siRNA. Replicates the genomic and antigenomic RNA. The chain is Replicase polyprotein from Teleogryllus oceanicus (black field cricket).